Here is a 264-residue protein sequence, read N- to C-terminus: ATP synthase subunit a (264 aa).

Transmembrane regions (helical) follow at residues 27-47 (VHLD…FVFS), 87-107 (VGPL…IDLI), 131-151 (DISG…FYTI), 172-192 (LLIP…PVSL), 196-216 (LFGN…MYMA), and 230-250 (LAWA…FMML).

Belongs to the ATPase A chain family. In terms of assembly, F-type ATPases have 2 components, CF(1) - the catalytic core - and CF(0) - the membrane proton channel. CF(1) has five subunits: alpha(3), beta(3), gamma(1), delta(1), epsilon(1). CF(0) has three main subunits: a(1), b(2) and c(9-12). The alpha and beta chains form an alternating ring which encloses part of the gamma chain. CF(1) is attached to CF(0) by a central stalk formed by the gamma and epsilon chains, while a peripheral stalk is formed by the delta and b chains.

It localises to the cell inner membrane. Its function is as follows. Key component of the proton channel; it plays a direct role in the translocation of protons across the membrane. This chain is ATP synthase subunit a, found in Pasteurella multocida (strain Pm70).